Here is a 646-residue protein sequence, read N- to C-terminus: Long-chain fatty acid transport protein 1 (646 aa).

Over 1 to 13 the chain is Extracellular; sequence MRAPGAGSASVAS. A helical membrane pass occupies residues 14–34; it reads LVLLWLLGLPWTWSTAAALGV. Over 35-646 the chain is Cytoplasmic; it reads YVGGGGWRFL…TRICSGAFAL (612 aa). Positions 191–475 are sufficient for oligomerization; it reads EMSGELGKSL…YISESATSKK (285 aa). 246–257 is a binding site for AMP; sequence YIYTSGTTGLPK.

The protein belongs to the ATP-dependent AMP-binding enzyme family. In terms of assembly, self-associates. May function as a homodimer. Interacts with EPRS1; mediates the translocation of SLC27A1 from the cytoplasm to the plasma membrane thereby increasing the uptake of long-chain fatty acids. Interacts with DGAT2 and this interaction is enhanced in the presence of ZFYVE1.

It localises to the cell membrane. Its subcellular location is the endomembrane system. It is found in the cytoplasm. It catalyses the reaction a fatty acid(in) = a fatty acid(out). It carries out the reaction (9Z)-octadecenoate(out) = (9Z)-octadecenoate(in). The enzyme catalyses hexadecanoate(out) = hexadecanoate(in). The catalysed reaction is (5Z,8Z,11Z,14Z)-eicosatetraenoate(out) = (5Z,8Z,11Z,14Z)-eicosatetraenoate(in). It catalyses the reaction (9Z,12Z)-octadecadienoate(out) = (9Z,12Z)-octadecadienoate(in). It carries out the reaction a long-chain fatty acid + ATP + CoA = a long-chain fatty acyl-CoA + AMP + diphosphate. The enzyme catalyses (5Z,8Z,11Z,14Z)-eicosatetraenoate + ATP + CoA = (5Z,8Z,11Z,14Z)-eicosatetraenoyl-CoA + AMP + diphosphate. The catalysed reaction is a very long-chain fatty acid + ATP + CoA = a very long-chain fatty acyl-CoA + AMP + diphosphate. It catalyses the reaction tetracosanoate + ATP + CoA = tetracosanoyl-CoA + AMP + diphosphate. With respect to regulation, inhibited by Triacsin C. Its function is as follows. Mediates the import of long-chain fatty acids (LCFA) into the cell by facilitating their transport at the plasma membrane. Also functions as an acyl-CoA ligase catalyzing the ATP-dependent formation of fatty acyl-CoA using LCFA and very-long-chain fatty acids (VLCFA) as substrates, which prevents fatty acid efflux from cells and might drive more fatty acid uptake. May act directly as a bona fide transporter, or alternatively, in a cytoplasmic or membrane-associated multimeric protein complex to trap and draw fatty acids towards accumulation. Plays a pivotal role in regulating available LCFA substrates from exogenous sources in tissues undergoing high levels of beta-oxidation or triglyceride synthesis. May be involved in regulation of cholesterol metabolism. Probably involved in fatty acid transport across the blood barrier. This is Long-chain fatty acid transport protein 1 from Bos taurus (Bovine).